The primary structure comprises 113 residues: Integration host factor subunit alpha (113 aa).

This sequence belongs to the bacterial histone-like protein family. As to quaternary structure, heterodimer of an alpha and a beta chain.

In terms of biological role, this protein is one of the two subunits of integration host factor, a specific DNA-binding protein that functions in genetic recombination as well as in transcriptional and translational control. The protein is Integration host factor subunit alpha of Rhodopseudomonas palustris (strain BisA53).